Here is a 267-residue protein sequence, read N- to C-terminus: Glucosamine-6-phosphate deaminase (267 aa).

Residue aspartate 72 is the Proton acceptor; for enolization step of the active site. The For ring-opening step role is filled by aspartate 141. Histidine 143 serves as the catalytic Proton acceptor; for ring-opening step. The active-site For ring-opening step is glutamate 148.

This sequence belongs to the glucosamine/galactosamine-6-phosphate isomerase family. NagB subfamily.

It catalyses the reaction alpha-D-glucosamine 6-phosphate + H2O = beta-D-fructose 6-phosphate + NH4(+). The protein operates within amino-sugar metabolism; N-acetylneuraminate degradation; D-fructose 6-phosphate from N-acetylneuraminate: step 5/5. Its activity is regulated as follows. Allosterically activated by N-acetylglucosamine 6-phosphate (GlcNAc6P). Catalyzes the reversible isomerization-deamination of glucosamine 6-phosphate (GlcN6P) to form fructose 6-phosphate (Fru6P) and ammonium ion. This is Glucosamine-6-phosphate deaminase from Borrelia hermsii (strain HS1 / DAH).